A 74-amino-acid chain; its full sequence is Anionic peptide clone 8 (74 aa).

An N-terminal signal peptide occupies residues 1–24 (MVSKSLIVLLLVSVLVSTFFTTEA).

The protein belongs to the non-disulfide-bridged peptide (NDBP) superfamily. Long chain multifunctional peptide (group 2) family. In terms of tissue distribution, expressed by the venom gland.

The protein resides in the secreted. May be an antimicrobial peptide. The chain is Anionic peptide clone 8 from Tityus costatus (Brazilian scorpion).